The sequence spans 107 residues: MVSGVSRNAARTSSGCIVALVSTDDDYTSQDVTTIPQAIRFPSSCLVTYSCVSCYLAIPSGKLHAASSFEHVLECTVAPVSEYVKSVFVGSSIECTGRSGSVTFALV.

Residues 1 to 8 (MVSGVSRN) constitute a propeptide that is removed on maturation. Positions 45, 51, and 54 each coordinate [2Fe-2S] cluster.

It depends on [2Fe-2S] cluster as a cofactor.

It localises to the hydrogenosome. Ferredoxins are iron-sulfur proteins that transfer electrons in a wide variety of metabolic reactions. The chain is Ferredoxin from Psalteriomonas lanterna (Amoeboflagellate).